The following is a 179-amino-acid chain: Large ribosomal subunit protein uL6 (179 aa).

This sequence belongs to the universal ribosomal protein uL6 family. In terms of assembly, part of the 50S ribosomal subunit.

In terms of biological role, this protein binds to the 23S rRNA, and is important in its secondary structure. It is located near the subunit interface in the base of the L7/L12 stalk, and near the tRNA binding site of the peptidyltransferase center. This chain is Large ribosomal subunit protein uL6, found in Leptospira borgpetersenii serovar Hardjo-bovis (strain JB197).